The sequence spans 446 residues: Phosphoglucosamine mutase (446 aa).

Ser-100 serves as the catalytic Phosphoserine intermediate. Mg(2+) is bound by residues Ser-100, Asp-239, Asp-241, and Asp-243. Ser-100 bears the Phosphoserine mark.

Belongs to the phosphohexose mutase family. Requires Mg(2+) as cofactor. Post-translationally, activated by phosphorylation.

It catalyses the reaction alpha-D-glucosamine 1-phosphate = D-glucosamine 6-phosphate. In terms of biological role, catalyzes the conversion of glucosamine-6-phosphate to glucosamine-1-phosphate. This is Phosphoglucosamine mutase from Shouchella clausii (strain KSM-K16) (Alkalihalobacillus clausii).